The sequence spans 78 residues: Hainantoxin-XX.3 (78 aa).

Positions 1–23 (MKSATLLALSFLLIASCFLICEA) are cleaved as a signal peptide. The propeptide occupies 24–47 (EHSRYEEHEILEENMGDVVNLEQR). Disulfide bonds link C49-C62, C56-C66, and C61-C77.

This sequence belongs to the hainantoxin family. 20 subfamily. In terms of tissue distribution, expressed by the venom gland.

The protein resides in the secreted. Putative ion channel inhibitor. The sequence is that of Hainantoxin-XX.3 from Cyriopagopus hainanus (Chinese bird spider).